A 128-amino-acid polypeptide reads, in one-letter code: Transcription antitermination protein NusB (128 aa).

Belongs to the NusB family.

Functionally, involved in transcription antitermination. Required for transcription of ribosomal RNA (rRNA) genes. Binds specifically to the boxA antiterminator sequence of the ribosomal RNA (rrn) operons. In Exiguobacterium sp. (strain ATCC BAA-1283 / AT1b), this protein is Transcription antitermination protein NusB.